The sequence spans 91 residues: Elongation factor 1-beta (91 aa).

The protein belongs to the EF-1-beta/EF-1-delta family.

In terms of biological role, promotes the exchange of GDP for GTP in EF-1-alpha/GDP, thus allowing the regeneration of EF-1-alpha/GTP that could then be used to form the ternary complex EF-1-alpha/GTP/AAtRNA. In Thermococcus onnurineus (strain NA1), this protein is Elongation factor 1-beta.